The sequence spans 215 residues: Late embryogenesis abundant protein 14 (215 aa).

Disordered regions lie at residues 1-129 (MASQ…GQTG) and 190-215 (SGDN…SDYQ). Composition is skewed to basic and acidic residues over residues 13 to 24 (GETKARAEEKTG), 32 to 41 (EKAREAKDTA), 54 to 81 (GAKE…KDAA), and 88 to 111 (AMDK…DRAA). A compositionally biased stretch (polar residues) spans 192–215 (DNKNNAAAGKDTSTYKPGTGSDYQ).

Belongs to the LEA type 4 family. In terms of tissue distribution, expressed in the shoot apex and leaves. Expressed in dry seeds. Expressed in roots and leaves.

It localises to the nucleus. The protein is Late embryogenesis abundant protein 14 of Oryza sativa subsp. japonica (Rice).